The chain runs to 367 residues: DNA replication and repair protein RecF (367 aa).

ATP is bound at residue 30–37; that stretch reads GENAQGKT.

Belongs to the RecF family.

It is found in the cytoplasm. Its function is as follows. The RecF protein is involved in DNA metabolism; it is required for DNA replication and normal SOS inducibility. RecF binds preferentially to single-stranded, linear DNA. It also seems to bind ATP. This Chlamydia abortus (strain DSM 27085 / S26/3) (Chlamydophila abortus) protein is DNA replication and repair protein RecF.